A 537-amino-acid chain; its full sequence is Lariat debranching enzyme (537 aa).

Positions 8, 10, 39, and 84 each coordinate a divalent metal cation. The lariat recognition loop stretch occupies residues 124–154; sequence SGIYKGHDFLRGHHEFPPYTESTCRSVYHVR. A divalent metal cation contacts are provided by His174, His226, and His228. Disordered regions lie at residues 242–272 and 473–537; these read KAPT…SRLP and TAAE…EDDD. Positions 251–260 are enriched in low complexity; that stretch reads SSSSSSSSSS.

The protein belongs to the lariat debranching enzyme family. Fe(2+) is required as a cofactor. Requires Zn(2+) as cofactor. The cofactor is Mn(2+).

It localises to the nucleus. Its activity is regulated as follows. Active in presence of diverse metals including Fe(2+), Zn(2+), Mn(2+). Binds two metal cations in two adjacent alpha and beta metal-binding pockets. Its function is as follows. Cleaves the 2'-5' phosphodiester linkage at the branch point of lariat intron pre-mRNAs after splicing and converts them into linear molecules that are subsequently degraded. It thereby facilitates ribonucleotide turnover. This chain is Lariat debranching enzyme (DBR1), found in Drosophila pseudoobscura pseudoobscura (Fruit fly).